Here is a 329-residue protein sequence, read N- to C-terminus: Phenylalanine--tRNA ligase alpha subunit (329 aa).

Residue Glu254 participates in Mg(2+) binding.

The protein belongs to the class-II aminoacyl-tRNA synthetase family. Phe-tRNA synthetase alpha subunit type 1 subfamily. In terms of assembly, tetramer of two alpha and two beta subunits. The cofactor is Mg(2+).

It localises to the cytoplasm. The catalysed reaction is tRNA(Phe) + L-phenylalanine + ATP = L-phenylalanyl-tRNA(Phe) + AMP + diphosphate + H(+). The chain is Phenylalanine--tRNA ligase alpha subunit from Histophilus somni (strain 129Pt) (Haemophilus somnus).